We begin with the raw amino-acid sequence, 86 residues long: Antimicrobial peptide 2 (86 aa).

The signal sequence occupies residues 1-25 (MVNMKCVALIVIVMMAFMMVDPSMG). Disulfide bonds link cysteine 29–cysteine 40, cysteine 34–cysteine 46, and cysteine 39–cysteine 53. Residues 29 to 53 (CVRGRCPSGMCCSQFGYCGKGPKYC) enclose the Chitin-binding type-1 domain. The propeptide at 56–86 (ASTTVDHQADVAATKTAKNPTDAKLAGAGSP) is removed in mature form.

As to quaternary structure, homodimer.

In terms of biological role, chitin-binding protein with a defensive function against numerous chitin containing fungal pathogens. It is also a potent inhibitor of Gram-positive bacteria. The polypeptide is Antimicrobial peptide 2 (Amaranthus caudatus (Love-lies-bleeding)).